A 538-amino-acid chain; its full sequence is Protein NRT1/ PTR FAMILY 5.11 (538 aa).

2 helical membrane-spanning segments follow: residues 44-64 and 74-94; these read FAYFGIASNLIMYLTGPLGES and AWTGTVAFLPLLGGFLADSYL. T99 carries the phosphothreonine modification. A run of 10 helical transmembrane segments spans residues 100–120, 134–154, 175–194, 204–224, 308–328, 342–362, 389–409, 424–444, 463–483, and 507–527; these read IIISSSLYILGLGLLSFSTMI, TIFFFSLYLVAIGQGGYNPCI, SFFNWLMFGNCISILTTRLV, WSLGFGIPSVSMLLSLFLFLL, IPIWITSVVYTIVHAQSPTFF, GLLVPAATLQSFINLSVVVFI, IGTGIFLSILAMVLAALVETK, VWWLIPQYVIFGVSDMFTMVG, ALNLSIYGAGNYLSSFMISVI, and YFYWLLACLGFIGFAFYLWFA.

It belongs to the major facilitator superfamily. Proton-dependent oligopeptide transporter (POT/PTR) (TC 2.A.17) family. In terms of tissue distribution, expressed in shoots and roots.

It localises to the membrane. This Arabidopsis thaliana (Mouse-ear cress) protein is Protein NRT1/ PTR FAMILY 5.11 (NPF5.11).